A 637-amino-acid polypeptide reads, in one-letter code: Nuclear receptor subfamily 2 group C member 1-B (637 aa).

A DNA-binding region (nuclear receptor) is located at residues 149 to 224 (VELCVVCGDK…LGMKQDSVQC (76 aa)). 2 consecutive NR C4-type zinc fingers follow at residues 152-172 (CVVC…CEGC) and 188-207 (CRGS…CQYC). One can recognise an NR LBD domain in the interval 383-624 (CVGSGSNLLP…SIIPYILRME (242 aa)).

Belongs to the nuclear hormone receptor family. NR2 subfamily.

The protein resides in the nucleus. Its function is as follows. Orphan nuclear receptor. Binds the IR7 element in the promoter of its own gene in an autoregulatory negative feedback mechanism. Primarily repressor of a broad range of genes. Binds to hormone response elements (HREs) consisting of two 5'-AGGTCA-3' half site direct repeat consensus sequences. This Xenopus laevis (African clawed frog) protein is Nuclear receptor subfamily 2 group C member 1-B (nr2c1-b).